Here is a 148-residue protein sequence, read N- to C-terminus: Glutamyl-tRNA(Gln) amidotransferase subunit C, mitochondrial (148 aa).

It belongs to the GatC family. Subunit of the heterotrimeric GatCAB amidotransferase (AdT) complex, composed of A, B and C subunits.

It localises to the mitochondrion. It carries out the reaction L-glutamyl-tRNA(Gln) + L-glutamine + ATP + H2O = L-glutaminyl-tRNA(Gln) + L-glutamate + ADP + phosphate + H(+). Allows the formation of correctly charged Gln-tRNA(Gln) through the transamidation of misacylated Glu-tRNA(Gln) in the mitochondria. The reaction takes place in the presence of glutamine and ATP through an activated gamma-phospho-Glu-tRNA(Gln). The protein is Glutamyl-tRNA(Gln) amidotransferase subunit C, mitochondrial of Drosophila sechellia (Fruit fly).